Reading from the N-terminus, the 184-residue chain is Translocon-associated protein subunit beta (184 aa).

Residues 1–20 form the signal peptide; it reads MNFKTVISLFLVLFVSFVYC. Topologically, residues 21–147 are lumenal; sequence ENGAELLFHK…SQADYEKRTS (127 aa). A glycan (N-linked (GlcNAc...) asparagine) is linked at Asn-94. The chain crosses the membrane as a helical span at residues 148–168; it reads LLIKEWITFFVLCAGAIALPY. The Cytoplasmic segment spans residues 169-184; it reads SISTYYKKNYENGIKK.

It belongs to the TRAP-beta family. Heterotrimer of TRAP-alpha, TRAP-beta and TRAP-gamma.

Its subcellular location is the endoplasmic reticulum membrane. Its function is as follows. TRAP proteins are part of a complex whose function is to bind calcium to the ER membrane and thereby regulate the retention of ER resident proteins. The polypeptide is Translocon-associated protein subunit beta (ssr2) (Dictyostelium discoideum (Social amoeba)).